We begin with the raw amino-acid sequence, 213 residues long: 3,4-dihydroxy-2-butanone 4-phosphate synthase (213 aa).

D-ribulose 5-phosphate is bound by residues 27-28, Asp32, 140-144, and Glu164; these read RE and RTGHT. Glu28 contributes to the Mg(2+) binding site. A Mg(2+)-binding site is contributed by His143.

It belongs to the DHBP synthase family. Homodimer. Requires Mg(2+) as cofactor. Mn(2+) serves as cofactor.

It catalyses the reaction D-ribulose 5-phosphate = (2S)-2-hydroxy-3-oxobutyl phosphate + formate + H(+). It participates in cofactor biosynthesis; riboflavin biosynthesis; 2-hydroxy-3-oxobutyl phosphate from D-ribulose 5-phosphate: step 1/1. In terms of biological role, catalyzes the conversion of D-ribulose 5-phosphate to formate and 3,4-dihydroxy-2-butanone 4-phosphate. This is 3,4-dihydroxy-2-butanone 4-phosphate synthase from Agrobacterium fabrum (strain C58 / ATCC 33970) (Agrobacterium tumefaciens (strain C58)).